The following is a 430-amino-acid chain: Histidine--tRNA ligase (430 aa).

The protein belongs to the class-II aminoacyl-tRNA synthetase family. As to quaternary structure, homodimer.

It localises to the cytoplasm. The enzyme catalyses tRNA(His) + L-histidine + ATP = L-histidyl-tRNA(His) + AMP + diphosphate + H(+). In Acinetobacter baylyi (strain ATCC 33305 / BD413 / ADP1), this protein is Histidine--tRNA ligase.